Here is a 155-residue protein sequence, read N- to C-terminus: 2-C-methyl-D-erythritol 2,4-cyclodiphosphate synthase (155 aa).

Residues Asp-9 and His-11 each coordinate a divalent metal cation. Residues Asp-9–His-11 and His-35–Ser-36 contribute to the 4-CDP-2-C-methyl-D-erythritol 2-phosphate site. His-43 is an a divalent metal cation binding site. Residue Asp-57–Gly-59 participates in 4-CDP-2-C-methyl-D-erythritol 2-phosphate binding.

It belongs to the IspF family. In terms of assembly, homotrimer. Requires a divalent metal cation as cofactor.

It carries out the reaction 4-CDP-2-C-methyl-D-erythritol 2-phosphate = 2-C-methyl-D-erythritol 2,4-cyclic diphosphate + CMP. Its pathway is isoprenoid biosynthesis; isopentenyl diphosphate biosynthesis via DXP pathway; isopentenyl diphosphate from 1-deoxy-D-xylulose 5-phosphate: step 4/6. Functionally, involved in the biosynthesis of isopentenyl diphosphate (IPP) and dimethylallyl diphosphate (DMAPP), two major building blocks of isoprenoid compounds. Catalyzes the conversion of 4-diphosphocytidyl-2-C-methyl-D-erythritol 2-phosphate (CDP-ME2P) to 2-C-methyl-D-erythritol 2,4-cyclodiphosphate (ME-CPP) with a corresponding release of cytidine 5-monophosphate (CMP). The chain is 2-C-methyl-D-erythritol 2,4-cyclodiphosphate synthase from Koribacter versatilis (strain Ellin345).